We begin with the raw amino-acid sequence, 224 residues long: UPF0758 protein Tola_0183 (224 aa).

Residues 102-224 (SLTSPQLVRR…PVSFAERGWL (123 aa)) enclose the MPN domain. Residues histidine 173, histidine 175, and aspartate 186 each coordinate Zn(2+). Residues 173 to 186 (HNHPSGVAEPSHAD) carry the JAMM motif motif.

This sequence belongs to the UPF0758 family.

The chain is UPF0758 protein Tola_0183 from Tolumonas auensis (strain DSM 9187 / NBRC 110442 / TA 4).